We begin with the raw amino-acid sequence, 424 residues long: MAQLVYLCFRDNTLSEPFSNLIDMKYDHQIKVSKPSFKLPEFEKVKQLIEICNELKRTYKKEPNGGSPQLFHLALEQLRVLNRIYENRTNWMTELLYQSGEQLYAIANKLDEIQNKLDGPEDTGDGDEEESYLIQAGRVMHMTLNICFKDRNERVDENRKIGVFYIGTLLFKLYNRIKAYGLLNNMCKVFESHFNEIGPYLSRINNDLIVIRFKFYMGLYYGYEKNNYALGFKWLQETFDICTLYESIPSTYKVRSQVLIYLIPMRILHLRHYPRLAPLRRTYPSVAKIYTMLVKSLCTGNLKLYEKFIEDNEFYLVKRNLYVTVLKMKELVELKLVKKAWILNGGNTKVPLDMLAKAFQISRGTPCHVTENVAPNHDQELDELECILATLISKNYIKGYLSHSHRVMMTSKTPFPGLAKPLER.

Positions 224 to 415 constitute a PCI domain; sequence EKNNYALGFK…RVMMTSKTPF (192 aa).

It belongs to the CSN12 family. As to quaternary structure, component of a COP9 signalosome-like (CSN) complex.

Its subcellular location is the cytoplasm. The protein localises to the nucleus. Functionally, component of the COP9 signalosome (CSN) complex that acts as an regulator of the ubiquitin (Ubl) conjugation pathway by mediating the deneddylation of the cullin subunit of SCF-type E3 ubiquitin-protein ligase complexes. The CSN complex is involved in the regulation of the mating pheromone response. This Kluyveromyces lactis (strain ATCC 8585 / CBS 2359 / DSM 70799 / NBRC 1267 / NRRL Y-1140 / WM37) (Yeast) protein is COP9 signalosome complex subunit 12 (CSN12).